The sequence spans 366 residues: Ribosomal RNA large subunit methyltransferase M (366 aa).

Residues serine 188, 221–224, aspartate 240, aspartate 260, and aspartate 277 contribute to the S-adenosyl-L-methionine site; that span reads CPGG. Lysine 306 serves as the catalytic Proton acceptor.

This sequence belongs to the class I-like SAM-binding methyltransferase superfamily. RNA methyltransferase RlmE family. RlmM subfamily. Monomer.

It localises to the cytoplasm. It carries out the reaction cytidine(2498) in 23S rRNA + S-adenosyl-L-methionine = 2'-O-methylcytidine(2498) in 23S rRNA + S-adenosyl-L-homocysteine + H(+). In terms of biological role, catalyzes the 2'-O-methylation at nucleotide C2498 in 23S rRNA. The chain is Ribosomal RNA large subunit methyltransferase M from Escherichia fergusonii (strain ATCC 35469 / DSM 13698 / CCUG 18766 / IAM 14443 / JCM 21226 / LMG 7866 / NBRC 102419 / NCTC 12128 / CDC 0568-73).